The chain runs to 187 residues: MSRIGKRPITVPKGVQVTIGEQNLVTVKGPKGTLSQQLHPEMIIRQEGDVITVQRPSDGKLHRALHGLTRTLIHNMVVGVTQGWQRALEINGVGYRAQLEGKTLVLNLGFSHPVRIEPPPNISYIVGERKSANDPLALTVVGIDKQQVGEEAARIRSLRPPEPYKGKGIKYAEEKIRRKAGKAGKAK.

Positions 151-170 are disordered; that stretch reads EAARIRSLRPPEPYKGKGIK.

The protein belongs to the universal ribosomal protein uL6 family. In terms of assembly, part of the 50S ribosomal subunit.

Functionally, this protein binds to the 23S rRNA, and is important in its secondary structure. It is located near the subunit interface in the base of the L7/L12 stalk, and near the tRNA binding site of the peptidyltransferase center. The sequence is that of Large ribosomal subunit protein uL6 from Chloroflexus aurantiacus (strain ATCC 29366 / DSM 635 / J-10-fl).